Here is a 617-residue protein sequence, read N- to C-terminus: Na(+)/H(+) antiporter NhaA 1 (617 aa).

The tract at residues 1-433 (MTVTEQTTAR…GWAIFRITDW (433 aa)) is na(+)/H(+) antiporter NhaA. 11 consecutive transmembrane segments (helical) span residues 33–53 (AAALLLTFTVIAILWANSPWA), 75–95 (MTVKHLVNDALMTFFFFIVGL), 113–133 (AVPVVAAAAGLIVPAIVFLAF), 141–161 (HAWGVVISTDTAFLVGALAII), 171–191 (LFLLTLAVVDDVGALVAIAVF), 194–214 (DAIQVGPLVVAVAVLVALALV), 234–254 (VALYLAGIHPTLAGVAVALLI), 304–324 (VGPAVSFVILPLFALVNAGVL), 340–360 (WGVVAGLVIGKFVGITGATWL), 378–398 (IAGGAALSGIGFTISLFIVDI), and 411–431 (IGVLAASVLAFVFGWAIFRIT). The 184-residue stretch at 434 to 617 (LSPPEPVGLK…LIRALEAGRR (184 aa)) folds into the Thioredoxin domain.

It in the N-terminal section; belongs to the NhaA Na(+)/H(+) (TC 2.A.33) antiporter family.

The protein localises to the cell membrane. The enzyme catalyses Na(+)(in) + 2 H(+)(out) = Na(+)(out) + 2 H(+)(in). Na(+)/H(+) antiporter that extrudes sodium in exchange for external protons. In Mycolicibacterium vanbaalenii (strain DSM 7251 / JCM 13017 / BCRC 16820 / KCTC 9966 / NRRL B-24157 / PYR-1) (Mycobacterium vanbaalenii), this protein is Na(+)/H(+) antiporter NhaA 1.